The chain runs to 311 residues: MTEEINIDTATLEQLRDVLTNKSGDVKLANRFRALFNLKCVGAESENQDEVHKAIDYIAESFKDDSELLKHEVAYVLGQTKNLHAAQYLRSVLENNNQQIMVRHEAAEALGALGDKDSLALLEDYFKNDPSIEIKQTCELAIERIRWENSEKAKAENLETSLYTSIDPAPPMPSDQESKVEKLQKILNNQDEPLFERYRAMFRLRDMGTDEACLALASGLDDDPSALFKHEIAYVFGQLCNPVTVPALIKTLKDEREAAMVRHEAAEALGSIATDECLPVLQSFLNDKDQVVRDSAVVALDMYEYENSTEI.

HEAT-like PBS-type repeat units follow at residues 69-95, 102-128, 196-222, 228-254, and 261-287; these read LKHEVAYVLGQTKNLHAAQYLRSVLEN, VRHEAAEALGALGDKDSLALLEDYFKN, ERYRAMFRLRDMGTDEACLALASGLDD, FKHEIAYVFGQLCNPVTVPALIKTLKD, and VRHEAAEALGSIATDECLPVLQSFLND. Residues histidine 71, glutamate 72, histidine 104, and glutamate 105 each contribute to the Fe cation site. Residues histidine 230, glutamate 231, histidine 263, and glutamate 264 each contribute to the Fe cation site.

The protein belongs to the deoxyhypusine hydroxylase family. Fe(2+) is required as a cofactor.

It is found in the cytoplasm. The protein resides in the nucleus. The catalysed reaction is [eIF5A protein]-deoxyhypusine + AH2 + O2 = [eIF5A protein]-hypusine + A + H2O. It participates in protein modification; eIF5A hypusination. Its function is as follows. Catalyzes the hydroxylation of the N(6)-(4-aminobutyl)-L-lysine intermediate to form hypusine, an essential post-translational modification only found in mature eIF-5A factor. This chain is Deoxyhypusine hydroxylase, found in Debaryomyces hansenii (strain ATCC 36239 / CBS 767 / BCRC 21394 / JCM 1990 / NBRC 0083 / IGC 2968) (Yeast).